The following is a 312-amino-acid chain: Phosphoribosylaminoimidazole-succinocarboxamide synthase (312 aa).

Belongs to the SAICAR synthetase family.

The catalysed reaction is 5-amino-1-(5-phospho-D-ribosyl)imidazole-4-carboxylate + L-aspartate + ATP = (2S)-2-[5-amino-1-(5-phospho-beta-D-ribosyl)imidazole-4-carboxamido]succinate + ADP + phosphate + 2 H(+). Its pathway is purine metabolism; IMP biosynthesis via de novo pathway; 5-amino-1-(5-phospho-D-ribosyl)imidazole-4-carboxamide from 5-amino-1-(5-phospho-D-ribosyl)imidazole-4-carboxylate: step 1/2. The polypeptide is Phosphoribosylaminoimidazole-succinocarboxamide synthase (Legionella pneumophila (strain Lens)).